We begin with the raw amino-acid sequence, 453 residues long: MSRKYFGTDGVRGKVGTFPITPDFVMRLGYAAGRVLTRMDHHLVPGTKPLVIIGKDTRISGYMFETALVSGLCAGGVNVRITGPLPTPAIAHVTRAQRAQAGIVISASHNPFDDNGIKFFSAQGTKLPDEVELAIEAELDQPMELVPTEQIGRVKRIDDAAGRYIEFCKSTFPNALDLRGLKIVLDCANGATYHVAPPVFHELGAEVISIGTQPNGLNINLNVGSTHPESLQQAVVEHQADLGIAFDGDGDRVVMADNQGQLLDGDQLLYIIASHRHQRGRLGGGVVGTLMTNLALEHALGKEGIPFQRAKVGDRYVLELLNANEWQLGGENSGHILCLDKHSSGDGIIAALQVLHALRASGLSLADWAKRLPLYPQVLINVKVAQRIDLDSNTALQAAVTSAEGALKGTGRVLLRASGTEPKIRVMVEGQDRPLVQRLAEEIAAVVQQEAAS.

Residue Ser108 is the Phosphoserine intermediate of the active site. Residues Ser108, Asp247, Asp249, and Asp251 each coordinate Mg(2+). Residue Ser108 is modified to Phosphoserine.

The protein belongs to the phosphohexose mutase family. Mg(2+) serves as cofactor. In terms of processing, activated by phosphorylation.

It carries out the reaction alpha-D-glucosamine 1-phosphate = D-glucosamine 6-phosphate. Functionally, catalyzes the conversion of glucosamine-6-phosphate to glucosamine-1-phosphate. This chain is Phosphoglucosamine mutase, found in Methylobacillus flagellatus (strain ATCC 51484 / DSM 6875 / VKM B-1610 / KT).